The primary structure comprises 254 residues: 4-hydroxy-tetrahydrodipicolinate reductase (254 aa).

Residue 7 to 12 (GASGRI) coordinates NAD(+). Arginine 35 is an NADP(+) binding site. Residues 91-93 (GTT) and 115-118 (AHNM) each bind NAD(+). Histidine 147 (proton donor/acceptor) is an active-site residue. A (S)-2,3,4,5-tetrahydrodipicolinate-binding site is contributed by histidine 148. Lysine 151 (proton donor) is an active-site residue. A (S)-2,3,4,5-tetrahydrodipicolinate-binding site is contributed by 157-158 (GT).

The protein belongs to the DapB family.

It is found in the cytoplasm. The catalysed reaction is (S)-2,3,4,5-tetrahydrodipicolinate + NAD(+) + H2O = (2S,4S)-4-hydroxy-2,3,4,5-tetrahydrodipicolinate + NADH + H(+). It catalyses the reaction (S)-2,3,4,5-tetrahydrodipicolinate + NADP(+) + H2O = (2S,4S)-4-hydroxy-2,3,4,5-tetrahydrodipicolinate + NADPH + H(+). Its pathway is amino-acid biosynthesis; L-lysine biosynthesis via DAP pathway; (S)-tetrahydrodipicolinate from L-aspartate: step 4/4. Its function is as follows. Catalyzes the conversion of 4-hydroxy-tetrahydrodipicolinate (HTPA) to tetrahydrodipicolinate. The chain is 4-hydroxy-tetrahydrodipicolinate reductase from Helicobacter pylori (strain HPAG1).